Consider the following 492-residue polypeptide: Xaa-Pro dipeptidase (492 aa).

A2 carries the N-acetylalanine modification. A Phosphoserine modification is found at S167. H255 contacts a dipeptide. Mn(2+) is bound by residues D276, D287, and H370. D287 provides a ligand contact to a dipeptide. Residues H377 and R398 each coordinate a dipeptide. Residues E412 and E452 each coordinate Mn(2+).

It belongs to the peptidase M24B family. Eukaryotic-type prolidase subfamily. Homodimer. It depends on Mn(2+) as a cofactor.

The enzyme catalyses Xaa-L-Pro dipeptide + H2O = an L-alpha-amino acid + L-proline. In terms of biological role, dipeptidase that catalyzes the hydrolysis of dipeptides with a prolyl (Xaa-Pro) or hydroxyprolyl residue in the C-terminal position. The preferred dipeptide substrate is Gly-Pro, but other Xaa-Pro dipeptides, such as Ala-Pro, Met-Pro, Phe-Pro, Val-Pro and Leu-Pro, can be cleaved. Plays an important role in collagen metabolism because the high level of iminoacids in collagen. The chain is Xaa-Pro dipeptidase (Pepd) from Rattus norvegicus (Rat).